The following is a 378-amino-acid chain: Alanine dehydrogenase (378 aa).

Positions 15 and 74 each coordinate substrate. The active-site Proton donor/acceptor is His95. Residues Ser132, 176-177, Asp196, Ser218, 237-238, 265-268, and 297-300 each bind NAD(+); these read VV, VL, VAID, and VANM. Asp268 serves as the catalytic Proton donor/acceptor.

Belongs to the AlaDH/PNT family. In terms of assembly, homohexamer. Trimer of dimer.

It is found in the cytoplasm. The catalysed reaction is L-alanine + NAD(+) + H2O = pyruvate + NH4(+) + NADH + H(+). Its pathway is amino-acid degradation; L-alanine degradation via dehydrogenase pathway; NH(3) and pyruvate from L-alanine: step 1/1. Its function is as follows. Catalyzes the reversible oxidative deamination of L-alanine to pyruvate. Oxidative deamination proceeds through a sequential, ordered ternary-binary mechanism, where NAD(+) binds first followed by L-alanine; the products are released in the order ammonia, pyruvate and NADH. Disruption blocks sporulation probably in stage V; 20-30% sporulation can be restored if the media is supplemented with pyruvate, suggesting lack of pyruvate blocks sporulation. Thus it is a key factor in the assimilation of L-alanine as an energy source via the tricarboxylic acid cycle during sporulation. In Bacillus subtilis (strain 168), this protein is Alanine dehydrogenase.